We begin with the raw amino-acid sequence, 427 residues long: Trigger factor (427 aa).

One can recognise a PPIase FKBP-type domain in the interval 165-250 (GDTVVIDFEG…LHEIQEQVPA (86 aa)).

Belongs to the FKBP-type PPIase family. Tig subfamily.

It localises to the cytoplasm. It catalyses the reaction [protein]-peptidylproline (omega=180) = [protein]-peptidylproline (omega=0). Functionally, involved in protein export. Acts as a chaperone by maintaining the newly synthesized protein in an open conformation. Functions as a peptidyl-prolyl cis-trans isomerase. The polypeptide is Trigger factor (Sulfurovum sp. (strain NBC37-1)).